Reading from the N-terminus, the 82-residue chain is Sec-independent protein translocase protein TatA (82 aa).

A helical membrane pass occupies residues 1–21 (MGIFDWKHWIVILIVVVLVFG). Positions 43-82 (VNTEEDDKKEQPAAQPAQPLNQPHTIDAQAQKVEEPARKD) are disordered.

This sequence belongs to the TatA/E family. As to quaternary structure, the Tat system comprises two distinct complexes: a TatABC complex, containing multiple copies of TatA, TatB and TatC subunits, and a separate TatA complex, containing only TatA subunits. Substrates initially bind to the TatABC complex, which probably triggers association of the separate TatA complex to form the active translocon.

The protein localises to the cell inner membrane. Its function is as follows. Part of the twin-arginine translocation (Tat) system that transports large folded proteins containing a characteristic twin-arginine motif in their signal peptide across membranes. TatA could form the protein-conducting channel of the Tat system. The polypeptide is Sec-independent protein translocase protein TatA (Pseudomonas paraeruginosa (strain DSM 24068 / PA7) (Pseudomonas aeruginosa (strain PA7))).